A 2579-amino-acid chain; its full sequence is Ectopic P granules protein 5 homolog (2579 aa).

2 disordered regions span residues 1 to 46 and 92 to 132; these read MAEA…SREQ and NEES…GTKV. Residues 7–23 show a composition bias toward basic residues; sequence PQRRAKAKASRTKTKEK. Residues 24-34 are compositionally biased toward basic and acidic residues; sequence KKYETPQREES. T134 is subject to Phosphothreonine. The disordered stretch occupies residues 535–564; sequence PSERKPSSSGPGSGTWTLVDEGGEEDEDPE. Residues 555 to 564 show a composition bias toward acidic residues; the sequence is EGGEEDEDPE. Residues 1607–1633 adopt a coiled-coil conformation; that stretch reads MHKNEAISQQLHVLRKEVKQLQAEAAK.

The protein belongs to the EPG5 family. Interacts with RAN.

The protein localises to the cytoplasm. It is found in the perinuclear region. Its subcellular location is the lysosome. Involved in autophagy. May play a role in a late step of autophagy, such as clearance of autophagosomal cargo. Plays a key role in innate and adaptive immune response triggered by unmethylated cytidine-phosphate-guanosine (CpG) dinucleotides from pathogens, and mediated by the nucleotide-sensing receptor TLR9. It is necessary for the translocation of CpG dinucleotides from early endosomes to late endosomes and lysosomes, where TLR9 is located. In Homo sapiens (Human), this protein is Ectopic P granules protein 5 homolog (EPG5).